Here is a 346-residue protein sequence, read N- to C-terminus: Protein RecA (346 aa).

65–72 (GPESSGKT) is a binding site for ATP.

Belongs to the RecA family.

The protein localises to the cytoplasm. In terms of biological role, can catalyze the hydrolysis of ATP in the presence of single-stranded DNA, the ATP-dependent uptake of single-stranded DNA by duplex DNA, and the ATP-dependent hybridization of homologous single-stranded DNAs. It interacts with LexA causing its activation and leading to its autocatalytic cleavage. This Pseudomonas aeruginosa (strain UCBPP-PA14) protein is Protein RecA.